The primary structure comprises 416 residues: Imidazolonepropionase (416 aa).

Fe(3+) is bound by residues His78 and His80. Residues His78 and His80 each coordinate Zn(2+). 4-imidazolone-5-propanoate contacts are provided by Arg87, Tyr150, and His183. Tyr150 is an N-formimidoyl-L-glutamate binding site. His248 contributes to the Fe(3+) binding site. His248 lines the Zn(2+) pocket. Residue Gln251 coordinates 4-imidazolone-5-propanoate. Asp323 contacts Fe(3+). Asp323 lines the Zn(2+) pocket. Residues Asn325 and Gly327 each contribute to the N-formimidoyl-L-glutamate site. Thr328 is a 4-imidazolone-5-propanoate binding site.

It belongs to the metallo-dependent hydrolases superfamily. HutI family. Zn(2+) is required as a cofactor. It depends on Fe(3+) as a cofactor.

It is found in the cytoplasm. It carries out the reaction 4-imidazolone-5-propanoate + H2O = N-formimidoyl-L-glutamate. It participates in amino-acid degradation; L-histidine degradation into L-glutamate; N-formimidoyl-L-glutamate from L-histidine: step 3/3. In terms of biological role, catalyzes the hydrolytic cleavage of the carbon-nitrogen bond in imidazolone-5-propanoate to yield N-formimidoyl-L-glutamate. It is the third step in the universal histidine degradation pathway. This Vibrio parahaemolyticus serotype O3:K6 (strain RIMD 2210633) protein is Imidazolonepropionase.